A 338-amino-acid polypeptide reads, in one-letter code: MLTERQLLILQTIIDDFIGSAQPVGSRTLAKKDEITFSSATIRNEMADLEELGFIEKTHSSSGRVPSEKGYRFYVDHLLAPQNLPNAEIVQIKDLFAERIFEAEKIAQQSAQILSELTNYTAIVLGPKLSTNKLKNVQIVPLDRQTAVAIIVTDTGHVQSKTITVPESVDLSDLEKMVNILNEKLSGVPMEELHNKIFKEIVTVLRGYVHNYDSAIKMLDGTFQVPLSEKIYFGGKANMLSQPEFHDIQKVRSLLTMIDNEAEFYDILRHKQVGIQVKIGRENSSTAMEDCSLISATYSIGEEQLGTIAILGPTRMQYSRVISLLQLFTRQFTDGLKK.

It belongs to the HrcA family.

Negative regulator of class I heat shock genes (grpE-dnaK-dnaJ and groELS operons). Prevents heat-shock induction of these operons. This is Heat-inducible transcription repressor HrcA from Bacillus cereus (strain B4264).